The sequence spans 542 residues: Doublesex- and mab-3-related transcription factor A2 (542 aa).

A DNA-binding region (DM) is located at residues 70 to 117 (CARCRNHGVVSALKGHKRYCRWKDCLCAKCTLIAERQRVMAAQVALRR). The disordered stretch occupies residues 201 to 316 (LQAGRPGSPL…GGSGPRQRTP (116 aa)). A DMA domain is found at 314–349 (RTPLDILTRVFPGHRRGVLELVLQGCGGDVVQAIEQ).

This sequence belongs to the DMRT family. In terms of tissue distribution, expressed in testis.

Its subcellular location is the nucleus. In terms of biological role, may be involved in sexual development. This chain is Doublesex- and mab-3-related transcription factor A2 (DMRTA2), found in Homo sapiens (Human).